Consider the following 414-residue polypeptide: Lactosylceramide alpha-2,3-sialyltransferase (414 aa).

Over 1 to 65 the chain is Cytoplasmic; it reads MHTEAVGGAA…MRRPSLLIKD (65 aa). A helical; Signal-anchor for type II membrane protein membrane pass occupies residues 66–86; it reads ICKCTLVAFGVWLLYILILNY. Residues 87–414 lie on the Lumenal side of the membrane; that stretch reads TAEECDMKRM…VVEDLSGGIH (328 aa). A disulfide bridge links C194 with C352. N-linked (GlcNAc...) asparagine glycans are attached at residues N235, N279, and N389.

The protein belongs to the glycosyltransferase 29 family. As to expression, mainly expressed in brain, and then testis, heart and liver, almost all tissues showed some levels of the gene expression.

It is found in the golgi apparatus membrane. The enzyme catalyses a beta-D-Gal-(1-&gt;4)-beta-D-Glc-(1&lt;-&gt;1)-Cer(d18:1(4E)) + CMP-N-acetyl-beta-neuraminate = a ganglioside GM3 (d18:1(4E)) + CMP + H(+). The catalysed reaction is ganglioside GA2 (d18:1(4E)/18:0) + CMP-N-acetyl-beta-neuraminate = ganglioside GM2 (d18:1(4E)/18:0) + CMP + H(+). It catalyses the reaction a beta-D-Gal-(1&lt;-&gt;1')-ceramide + CMP-N-acetyl-beta-neuraminate = N-acetyl-alpha-neuraminosyl-(2-&gt;3)-beta-D-galactosyl-(1&lt;-&gt;1')-ceramide + CMP + H(+). It carries out the reaction ganglioside GA1 (d18:1(4E)/18:0) + CMP-N-acetyl-beta-neuraminate = ganglioside GM1 (d18:1(4E)/18:0) + CMP + H(+). In terms of biological role, (Microbial infection) Gangliosides GD1b and GT1b (derived from GM3) may serve as receptors for some C.botulinum neurotoxins (minimally types BoNT/A, B, C). Functionally, transfers the sialyl group (N-acetyl-alpha-neuraminyl or NeuAc) from CMP-NeuAc to the non-reducing terminal galactose (Gal) of glycosphingolipids forming gangliosides (important molecules involved in the regulation of multiple cellular processes, including cell proliferation and differentiation, apoptosis, embryogenesis, development, and oncogenesis). Mainly involved in the biosynthesis of ganglioside GM3 but can also use different glycolipids as substrate acceptors such as D-galactosylceramide (GalCer), asialo-GM2 (GA2) and asialo-GM1 (GA1), although less preferentially than beta-D-Gal-(1-&gt;4)-beta-D-Glc-(1&lt;-&gt;1)-Cer (LacCer). This Mus musculus (Mouse) protein is Lactosylceramide alpha-2,3-sialyltransferase (St3gal5).